A 500-amino-acid chain; its full sequence is Probable betaine aldehyde dehydrogenase (500 aa).

Residue Gly249 to Gly254 coordinates NAD(+). Glu271 functions as the Proton acceptor in the catalytic mechanism. The Nucleophile role is filled by Cys305.

Belongs to the aldehyde dehydrogenase family.

It carries out the reaction betaine aldehyde + NAD(+) + H2O = glycine betaine + NADH + 2 H(+). It functions in the pathway amine and polyamine biosynthesis; betaine biosynthesis via choline pathway; betaine from betaine aldehyde: step 1/1. In Schizosaccharomyces pombe (strain 972 / ATCC 24843) (Fission yeast), this protein is Probable betaine aldehyde dehydrogenase (meu8).